The following is a 257-amino-acid chain: Imidazole glycerol phosphate synthase subunit HisF (257 aa).

Active-site residues include Asp-11 and Asp-130.

It belongs to the HisA/HisF family. In terms of assembly, heterodimer of HisH and HisF.

Its subcellular location is the cytoplasm. The enzyme catalyses 5-[(5-phospho-1-deoxy-D-ribulos-1-ylimino)methylamino]-1-(5-phospho-beta-D-ribosyl)imidazole-4-carboxamide + L-glutamine = D-erythro-1-(imidazol-4-yl)glycerol 3-phosphate + 5-amino-1-(5-phospho-beta-D-ribosyl)imidazole-4-carboxamide + L-glutamate + H(+). Its pathway is amino-acid biosynthesis; L-histidine biosynthesis; L-histidine from 5-phospho-alpha-D-ribose 1-diphosphate: step 5/9. IGPS catalyzes the conversion of PRFAR and glutamine to IGP, AICAR and glutamate. The HisF subunit catalyzes the cyclization activity that produces IGP and AICAR from PRFAR using the ammonia provided by the HisH subunit. This chain is Imidazole glycerol phosphate synthase subunit HisF, found in Aeromonas salmonicida (strain A449).